We begin with the raw amino-acid sequence, 585 residues long: Nucleus accumbens-associated protein 2 (585 aa).

In terms of domain architecture, BTB spans 30 to 94; the sequence is CDVSIVVKGQ…CYTGKLTMAA (65 aa). Glycyl lysine isopeptide (Lys-Gly) (interchain with G-Cter in SUMO2) cross-links involve residues lysine 171 and lysine 215. Over residues 238–261 the composition is skewed to polar residues; it reads PYPQGERTSPGASSLPTTDSSTSY. The disordered stretch occupies residues 238–269; sequence PYPQGERTSPGASSLPTTDSSTSYHNEDEDDD. Residues lysine 296, lysine 426, and lysine 453 each participate in a glycyl lysine isopeptide (Lys-Gly) (interchain with G-Cter in SUMO2) cross-link. The 98-residue stretch at 348-445 folds into the BEN domain; the sequence is GSGVYITRGQ…DMCTNARRVR (98 aa). Residues 541-585 are disordered; sequence APEQLPADGQSSPQAFEQGNTSSSRPQTPVATATRRPEGTYAGTL. Residues 549–571 show a composition bias toward polar residues; sequence GQSSPQAFEQGNTSSSRPQTPVA.

In terms of assembly, homooligomer; mediated by the BTB domain. Interacts with the NuRD complex. Interacts (via C-terminal part) with HDAC2. Interacts (via BTB domain) with MTA1, MTA2 and MTA3.

It localises to the nucleus. Functions as a transcriptional repressor through its association with the NuRD complex. Recruits the NuRD complex to the promoter of MDM2, leading to the repression of MDM2 transcription and subsequent stability of p53/TP53. This chain is Nucleus accumbens-associated protein 2 (Nacc2), found in Rattus norvegicus (Rat).